A 245-amino-acid polypeptide reads, in one-letter code: Polyhedrin (245 aa).

It belongs to the polyhedrin family.

Its function is as follows. Major component of the virus occlusion bodies, which are large proteinaceous structures (polyhedra), that protect the virus from the outside environment for extended periods until they are ingested by insect larvae. This chain is Polyhedrin (PH), found in Lepidoptera (butterflies and moths).